Consider the following 449-residue polypeptide: Exodeoxyribonuclease 7 large subunit (449 aa).

Belongs to the XseA family. As to quaternary structure, heterooligomer composed of large and small subunits.

Its subcellular location is the cytoplasm. The enzyme catalyses Exonucleolytic cleavage in either 5'- to 3'- or 3'- to 5'-direction to yield nucleoside 5'-phosphates.. Functionally, bidirectionally degrades single-stranded DNA into large acid-insoluble oligonucleotides, which are then degraded further into small acid-soluble oligonucleotides. The chain is Exodeoxyribonuclease 7 large subunit from Salmonella dublin (strain CT_02021853).